Here is a 786-residue protein sequence, read N- to C-terminus: Pheromone-regulated membrane protein 10 (786 aa).

A compositionally biased stretch (basic and acidic residues) spans 1-28; the sequence is MADSGDKDVSKSVRFDKESIESKKRSSV. Disordered regions lie at residues 1-65 and 77-103; these read MADS…EDGN and NGGA…DNDN. Residues 29 to 42 show a composition bias toward low complexity; sequence DDSASSYSSSSSGQ. The next 10 membrane-spanning stretches (helical) occupy residues 469 to 489, 491 to 511, 521 to 541, 545 to 565, 584 to 604, 620 to 640, 645 to 665, 675 to 695, 697 to 717, and 751 to 771; these read WVCV…AFGG, WINL…QFIL, VFEI…GSIP, ICFG…YIIL, FYAI…AALF, PISP…ISLI, WTQL…TYWS, FTAA…SRIW, GLAV…GIAS, and FGIT…ASTL.

It belongs to the ThrE exporter (TC 2.A.79) family.

The protein localises to the membrane. The sequence is that of Pheromone-regulated membrane protein 10 from Candida glabrata (strain ATCC 2001 / BCRC 20586 / JCM 3761 / NBRC 0622 / NRRL Y-65 / CBS 138) (Yeast).